Reading from the N-terminus, the 240-residue chain is MNERSTPQALTGPVIRAESLGKTYSEGKLLTQVFDGLDLQVMRGETVAIVGASGAGKSTLLHLLGGLDVPTAGEVYVAGQRMSALSDGDRGRLRNKTLGFIYQFHHLLPEFTALENVMMPVLLSGQSVCSAKMRAQMLLEAVELGHRLNHKPSELSGGERQRAAVARALANSPDCVLGDEPTGNLDNRTASTVFELMLELNRAQRTSLVLVTHDRGLARCLDRVLELYQGGLRELTSAEV.

One can recognise an ABC transporter domain in the interval 15–240 (IRAESLGKTY…GLRELTSAEV (226 aa)). Residue 51–58 (GASGAGKS) participates in ATP binding.

The protein belongs to the ABC transporter superfamily. Lipoprotein translocase (TC 3.A.1.125) family. As to quaternary structure, the complex is composed of two ATP-binding proteins (LolD) and two transmembrane proteins (LolC and LolE).

The protein localises to the cell inner membrane. Its function is as follows. Part of the ABC transporter complex LolCDE involved in the translocation of mature outer membrane-directed lipoproteins, from the inner membrane to the periplasmic chaperone, LolA. Responsible for the formation of the LolA-lipoprotein complex in an ATP-dependent manner. The chain is Lipoprotein-releasing system ATP-binding protein LolD from Xylella fastidiosa (strain Temecula1 / ATCC 700964).